The chain runs to 328 residues: Delta-aminolevulinic acid dehydratase (328 aa).

Catalysis depends on lysine 200, which acts as the Schiff-base intermediate with substrate. 5-aminolevulinate is bound by residues arginine 210 and lysine 222. Glutamate 238 provides a ligand contact to Mg(2+). Catalysis depends on lysine 253, which acts as the Schiff-base intermediate with substrate. Residues serine 279 and tyrosine 318 each coordinate 5-aminolevulinate.

The protein belongs to the ALAD family. In terms of assembly, homooctamer.

It catalyses the reaction 2 5-aminolevulinate = porphobilinogen + 2 H2O + H(+). It functions in the pathway porphyrin-containing compound metabolism; protoporphyrin-IX biosynthesis; coproporphyrinogen-III from 5-aminolevulinate: step 1/4. Its activity is regulated as follows. Stimulated by magnesium, inhibited by zinc. Functionally, catalyzes an early step in the biosynthesis of tetrapyrroles. Binds two molecules of 5-aminolevulinate per subunit, each at a distinct site, and catalyzes their condensation to form porphobilinogen. This chain is Delta-aminolevulinic acid dehydratase (hemB), found in Chlorobaculum tepidum (strain ATCC 49652 / DSM 12025 / NBRC 103806 / TLS) (Chlorobium tepidum).